The primary structure comprises 474 residues: Calcium/calmodulin-dependent protein kinase type IV (474 aa).

S11 and S12 each carry phosphoserine; by autocatalysis. The 255-residue stretch at 42–296 folds into the Protein kinase domain; sequence FEVESELGRG…TFQALQHPWV (255 aa). ATP-binding positions include 48-56 and K71; that span reads LGRGATSIV. T53 carries O-linked (GlcNAc) threonine glycosylation. S54 carries O-linked (GlcNAc) serine glycosylation. The O-linked (GlcNAc) serine glycan is linked to S133. The active-site Proton acceptor is the D160. S185 carries an O-linked (GlcNAc) serine glycan. T196 carries the phosphothreonine; by CaMKK1 and CaMKK2 modification. The interval 297-336 is autoinhibitory domain; that stretch reads TGKAANFVHMDTAQKKLQEFNARRKLKAAVKAVVASSRLG. Positions 302-319 are PP2A-binding; that stretch reads NFVHMDTAQKKLQEFNAR. The interval 318–337 is calmodulin-binding; the sequence is ARRKLKAAVKAVVASSRLGS. S332 bears the Phosphoserine; by autocatalysis mark. The interval 336–474 is disordered; it reads GSASSSHTNI…PQQDAILPEY (139 aa). Phosphoserine is present on S337. Residues S340, S341, and S352 are each glycosylated (O-linked (GlcNAc) serine). A compositionally biased stretch (polar residues) spans 342-356; sequence HTNIQESNKASSEAQ. Residues 360–392 show a composition bias toward basic and acidic residues; sequence DGKDKTDPLENKMQAGDHEAAKAAADETMKLQS. A compositionally biased stretch (acidic residues) spans 393-413; sequence EEVEEEEGVKEEEEEEEEEEE. Basic and acidic residues predominate over residues 431-454; it reads QEMKRNSEETLKSVEEEMDPKAEE. Residues S437 and S443 each carry the phosphoserine modification.

The protein belongs to the protein kinase superfamily. CAMK Ser/Thr protein kinase family. CaMK subfamily. As to quaternary structure, monomer. Interacts with protein phosphatase 2A (PPP2CA/PPP2CB); the interaction is mutually exclusive with binding to Ca(2+)/calmodulin. In terms of processing, phosphorylated by CaMKK1 and CaMKK2 on Thr-196. Dephosphorylated by protein phosphatase 2A. Autophosphorylated on Ser-11 and Ser-12. Post-translationally, glycosylation at Ser-185 modulates the phosphorylation of CaMK4 at Thr-196 and negatively regulates its activity toward CREB1 in basal conditions and during early inomycin stimulation. The N-terminus of calspermin is blocked. Isoform 1 is expressed in brain and isoform 2 is testis specific.

It localises to the cytoplasm. It is found in the nucleus. The catalysed reaction is L-seryl-[protein] + ATP = O-phospho-L-seryl-[protein] + ADP + H(+). It carries out the reaction L-threonyl-[protein] + ATP = O-phospho-L-threonyl-[protein] + ADP + H(+). With respect to regulation, activated by Ca(2+)/calmodulin. Binding of calmodulin results in conformational change that relieves intrasteric autoinhibition and allows phosphorylation of Thr-196 within the activation loop by CaMKK1 or CaMKK2. Phosphorylation of Thr-196 results in a 10-20-fold increase in total activity to generate Ca(2+)/calmodulin-independent activity. Autophosphorylation of the N-terminus Ser-11 and Ser-12 is required for full activation. Inactivated by protein phosphatase 2A (PPP2CA/PPP2CB) which dephosphorylates Thr-196, thereby terminating autonomous activity and helping to maintain the enzyme in its autoinhibited state. In terms of biological role, calcium/calmodulin-dependent protein kinase that operates in the calcium-triggered CaMKK-CaMK4 signaling cascade and regulates, mainly by phosphorylation, the activity of several transcription activators, such as CREB1, MEF2D, JUN and RORA, which play pivotal roles in immune response, inflammation, and memory consolidation. In the thymus, regulates the CD4(+)/CD8(+) double positive thymocytes selection threshold during T-cell ontogeny. In CD4 memory T-cells, is required to link T-cell antigen receptor (TCR) signaling to the production of IL2, IFNG and IL4 (through the regulation of CREB and MEF2). Regulates the differentiation and survival phases of osteoclasts and dendritic cells (DCs). Mediates DCs survival by linking TLR4 and the regulation of temporal expression of BCL2. Phosphorylates the transcription activator CREB1 on 'Ser-133' in hippocampal neuron nuclei and contribute to memory consolidation and long term potentiation (LTP) in the hippocampus. Can activate the MAP kinases MAPK1/ERK2, MAPK8/JNK1 and MAPK14/p38 and stimulate transcription through the phosphorylation of ELK1 and ATF2. Can also phosphorylate in vitro CREBBP, PRM2, MEF2A and STMN1/OP18. Heat-stable, acidic, calmodulin-binding protein. The chain is Calcium/calmodulin-dependent protein kinase type IV (Camk4) from Rattus norvegicus (Rat).